Here is a 428-residue protein sequence, read N- to C-terminus: Sporulation kinase C (428 aa).

2 helical membrane-spanning segments follow: residues 8–28 (IISIILAMIFIMFWDYLFYFI) and 36–56 (PVDIVYTAVTLVSVWMLAYYI). Residues 76-147 (LSEEKNRIMD…NTQIQNKASS (72 aa)) form the PAS domain. The region spanning 148-200 (GMFTAKYVTKNGTIFWGEVHYKLYYDRDDQFTGSLGTMSDITERKEAEDELIE) is the PAC domain. One can recognise a Histidine kinase domain in the interval 221–426 (GIAHEVRNPL…VFQVVLPLKS (206 aa)). Position 224 is a phosphohistidine; by autocatalysis (His-224).

In terms of assembly, oligomerizes, probably forms homodimers; oligomerization is assisted by FloT. Interacts with FloT. Another study shows only rare colocalization with FloT or FloA membrane assemblies. KinC membrane assemblies are more mobile than FloT membrane assemblies.

Its subcellular location is the cell membrane. The protein localises to the membrane raft. The enzyme catalyses ATP + protein L-histidine = ADP + protein N-phospho-L-histidine.. Its function is as follows. Phosphorylates the sporulation-regulatory protein Spo0A a transcription factor that also controls biofilm formation. Requires FloT and FloA for localization to DRMs and for activity. In Bacillus subtilis (strain 168), this protein is Sporulation kinase C.